A 146-amino-acid polypeptide reads, in one-letter code: D-aminoacyl-tRNA deacylase (146 aa).

A Gly-cisPro motif, important for rejection of L-amino acids motif is present at residues 137 to 138 (GP).

This sequence belongs to the DTD family. As to quaternary structure, homodimer.

The protein localises to the cytoplasm. The catalysed reaction is glycyl-tRNA(Ala) + H2O = tRNA(Ala) + glycine + H(+). It catalyses the reaction a D-aminoacyl-tRNA + H2O = a tRNA + a D-alpha-amino acid + H(+). Its function is as follows. An aminoacyl-tRNA editing enzyme that deacylates mischarged D-aminoacyl-tRNAs. Also deacylates mischarged glycyl-tRNA(Ala), protecting cells against glycine mischarging by AlaRS. Acts via tRNA-based rather than protein-based catalysis; rejects L-amino acids rather than detecting D-amino acids in the active site. By recycling D-aminoacyl-tRNA to D-amino acids and free tRNA molecules, this enzyme counteracts the toxicity associated with the formation of D-aminoacyl-tRNA entities in vivo and helps enforce protein L-homochirality. The polypeptide is D-aminoacyl-tRNA deacylase (Bacillus thuringiensis (strain Al Hakam)).